Here is a 345-residue protein sequence, read N- to C-terminus: S-adenosylmethionine:tRNA ribosyltransferase-isomerase (345 aa).

It belongs to the QueA family. In terms of assembly, monomer.

Its subcellular location is the cytoplasm. It carries out the reaction 7-aminomethyl-7-carbaguanosine(34) in tRNA + S-adenosyl-L-methionine = epoxyqueuosine(34) in tRNA + adenine + L-methionine + 2 H(+). It participates in tRNA modification; tRNA-queuosine biosynthesis. Functionally, transfers and isomerizes the ribose moiety from AdoMet to the 7-aminomethyl group of 7-deazaguanine (preQ1-tRNA) to give epoxyqueuosine (oQ-tRNA). This Anaeromyxobacter sp. (strain K) protein is S-adenosylmethionine:tRNA ribosyltransferase-isomerase.